The primary structure comprises 267 residues: Hydroxynaphthalene reductase-like protein Arp2 (267 aa).

Positions 25, 45, 71, and 98 each coordinate NADP(+). Residues Ser147 and Ser148 each act as proton donor in the active site. NADP(+)-binding residues include Tyr162, Lys166, Val195, and Thr197. Residue Tyr162 is the Proton acceptor of the active site. Lys166 acts as the Lowers pKa of active site Tyr in catalysis.

Belongs to the short-chain dehydrogenases/reductases (SDR) family.

In terms of biological role, hydroxynaphthalene reductase-like protein; part of the Pks2 gene cluster that mediates the formation of infectious structures (appressoria), enabling these fungi to kill insects faster. The product of the Pks2 gene cluster is different from the one of Pks1 and has still not been identified. The sequence is that of Hydroxynaphthalene reductase-like protein Arp2 from Metarhizium anisopliae (strain ARSEF 549).